The chain runs to 213 residues: Histone H1.1 (213 aa).

Residues 1–43 are disordered; it reads MSETAPVAQAASTATEKPAAAKKTKKPAKAAAPRKKPAGPSVS. The residue at position 2 (serine 2) is an N-acetylserine. Residues serine 2 and serine 12 each carry the phosphoserine modification. Residues 8-18 show a composition bias toward low complexity; that stretch reads AQAASTATEKP. Lysine 17 carries the post-translational modification N6-acetyllysine. The segment covering 20-37 has biased composition (basic residues); the sequence is AAKKTKKPAKAAAPRKKP. Position 36 is an N6-(beta-hydroxybutyryl)lysine (lysine 36). In terms of domain architecture, H15 spans 38 to 111; the sequence is AGPSVSELIV…GAAGSFKLNK (74 aa). At serine 43 the chain carries Phosphoserine. Lysine 54 bears the N6-(beta-hydroxybutyryl)lysine mark. Arginine 56 bears the Citrulline mark. An N6-(beta-hydroxybutyryl)lysine modification is found at lysine 66. Serine 67 is modified (phosphoserine). Position 77 is an N6-acetyllysine (lysine 77). N6-(beta-hydroxybutyryl)lysine is present on lysine 87. An N6-(beta-hydroxybutyryl)lysine; alternate modification is found at lysine 92. Lysine 92 carries the N6-acetyllysine; alternate modification. At serine 106 the chain carries Phosphoserine. Lysine 108 bears the N6-(beta-hydroxybutyryl)lysine mark. Positions 112 to 213 are disordered; it reads KAESKAITTK…KPKKAAPKKK (102 aa). The span at 120 to 144 shows a compositional bias: low complexity; sequence TKVSVKAKASGAAKKPKKTAGAAAK. Residue lysine 121 is modified to N6-acetyllysine. Composition is skewed to basic residues over residues 145-178 and 185-213; these read KTVK…KKVA and KAVK…PKKK. At threonine 201 the chain carries Phosphothreonine.

It belongs to the histone H1/H5 family. As to quaternary structure, interacts with DFFB. In terms of processing, H1 histones are progressively phosphorylated during the cell cycle, becoming maximally phosphorylated during late G2 phase and M phase, and being dephosphorylated sharply thereafter. Citrullination at Arg-56 (H1R54ci) by PADI4 takes place within the DNA-binding site of H1 and results in its displacement from chromatin and global chromatin decondensation, thereby promoting pluripotency and stem cell maintenance. Post-translationally, hydroxybutyrylation of histones is induced by starvation. As to expression, restricted to thymus, testis and spleen. Present also in lymphocytic and neuronal cells. Increases in testis starting with a low level at day 5 and reaching high concentrations in 20-day old and adult animals.

The protein resides in the nucleus. It localises to the chromosome. Histone H1 protein binds to linker DNA between nucleosomes forming the macromolecular structure known as the chromatin fiber. Histones H1 are necessary for the condensation of nucleosome chains into higher-order structured fibers. Also acts as a regulator of individual gene transcription through chromatin remodeling, nucleosome spacing and DNA methylation. The chain is Histone H1.1 from Mus musculus (Mouse).